Here is a 1143-residue protein sequence, read N- to C-terminus: Probable ATP-dependent RNA helicase DHX34 (1143 aa).

Disordered stretches follow at residues 1–24 (MPPP…EEEA) and 75–94 (TSRK…PALA). Basic and acidic residues predominate over residues 76-85 (SRKEEKDPGQ). A Helicase ATP-binding domain is found at 172 to 332 (LQTLKEHQVV…FSNAPVVQVP (161 aa)). ATP is bound at residue 185-192 (GDTGCGKS). Positions 279 to 282 (DEVH) match the DEAH box motif. A Helicase C-terminal domain is found at 368–536 (SIDHKYPPEE…SLVLQMKSMS (169 aa)). The interval 701-955 (QAAQVGDSYS…LRARWESALD (255 aa)) is negatively regulates interaction with UPF1. The segment at 724–766 (LKRQHEEGAGRRRKVLRLQEEQDGGSSDEDRAGPAPPGASDGV) is disordered. Residues Ser-749 and Ser-750 each carry the phosphoserine modification. Residues 810–1143 (PQLAVPDAFN…EVLRHRKQHV (334 aa)) are required for phosphorylation of UPF1. Not required for interaction with UPF1. Residues 957 to 1143 (QLAHQAQQQL…EVLRHRKQHV (187 aa)) are required for the interaction with SMG1 and subsequent phosphorylation of UPF1.

This sequence belongs to the DEAD box helicase family. DEAH subfamily. As to quaternary structure, forms a complex with RUVBL1 and RUVBL2. Part of a complex composed of SMG1, DHX34 and UPF1; within the complex DHX34 acts as a scaffolding protein to facilitate SMG1 phosphorylation of UPF1. Interacts with UPF1, MOV10, EIF4A3, XRN2, SMG6, SMG7, SMG9, UPF3A, UPF3B, CASC3/MLN51, XRN1, DIS3 and DCP1A; the interactions are RNA-independent. Interacts with NCBP1/CPB80; the interaction is RNA-dependent. Interacts (via C-terminus) with SMG1; the interaction is RNA-independent. Expressed in whole blood, testis and spleen. Also expressed in the brain.

The catalysed reaction is ATP + H2O = ADP + phosphate + H(+). In terms of biological role, probable ATP-binding RNA helicase required for nonsense-mediated decay (NMD) degradation of mRNA transcripts containing premature stop codons. Promotes the phosphorylation of UPF1 along with its interaction with key NMD pathway proteins UPF2 and EIF4A3. Interaction with the RUVBL1-RUVBL2 complex results in loss of nucleotide binding ability and ATP hydrolysis of the complex. Negatively regulates the nucleotide binding ability and ATP hydrolysis of the RUVBL1-RUVBL2 complex via induction of N-terminus conformation changes of the RUVBL2 subunits. The protein is Probable ATP-dependent RNA helicase DHX34 of Homo sapiens (Human).